The chain runs to 1228 residues: Myosin-1 (1228 aa).

Residues 1–27 (MAVTKRAGRRAQGGTQPAKGAQGVKKA) form a disordered region. In terms of domain architecture, Myosin motor spans 37-716 (VGVSDLTLLS…TLFALEHMRD (680 aa)). 130–137 (GESGAGKT) contacts ATP. Serine 358 bears the Phosphoserine mark. An actin-binding region spans residues 405 to 487 (TIGILDIYGF…PGIFAALNDA (83 aa)). IQ domains lie at 720 to 740 (HNMA…KTEC) and 741 to 768 (AIKI…SGHK). A TH1 domain is found at 776 to 962 (RRTYSLIGYR…SGSVQVPPGA (187 aa)). Disordered regions lie at residues 953–1040 (SGSV…AESA), 1053–1109 (QSLV…PAAP), and 1169–1228 (QGGA…DDDW). Residues 1053-1063 (QSLVNPRSGQG) show a composition bias toward polar residues. A compositionally biased stretch (low complexity) spans 1064–1092 (QQQQQHHQAYQQPTAAQPAATSYSPAPAK). The segment covering 1093-1106 (AAPPPPPPAPPAAP) has biased composition (pro residues). One can recognise an SH3 domain in the interval 1109 to 1170 (PAEPTYKALY…PAAYLEEVQG (62 aa)). The segment covering 1180–1194 (PTAGGASAGASLAEA) has biased composition (low complexity).

This sequence belongs to the TRAFAC class myosin-kinesin ATPase superfamily. Myosin family. Post-translationally, phosphorylation of the TEDS site (Ser-358) is required for the polarization of the actin cytoskeleton. Phosphorylation probably activates the myosin-I ATPase activity.

Its subcellular location is the cytoplasm. It is found in the cytoskeleton. The protein localises to the actin patch. In terms of biological role, type-I myosin implicated in the organization of the actin cytoskeleton. Required for proper actin cytoskeleton polarization. At the cell cortex, assembles in patch-like structures together with proteins from the actin-polymerizing machinery and promotes actin assembly. Functions as actin nucleation-promoting factor (NPF) for the Arp2/3 complex. The chain is Myosin-1 (MYO1) from Yarrowia lipolytica (strain CLIB 122 / E 150) (Yeast).